Here is a 640-residue protein sequence, read N- to C-terminus: LRR receptor kinase SERL2 (640 aa).

Residues 1-22 (MEPPFFLLLLLLVVSSSSPSAA) form the signal peptide. Topologically, residues 23 to 241 (LLSAKGVNNE…AARDRGHKFA (219 aa)) are extracellular. N-linked (GlcNAc...) asparagine glycans are attached at residues N94 and N107. LRR repeat units lie at residues 95–119 (LTNL…IGRL), 120–143 (ENLK…VGHL), 145–167 (SLQY…SANL), and 168–191 (SHLV…LART). N153, N166, N179, and N222 each carry an N-linked (GlcNAc...) asparagine glycan. The helical transmembrane segment at 242–262 (VAFGSTAGCMGLLLLAAGFLF) threads the bilayer. At 263–640 (WWRHRRNRQI…VQAVELSGPR (378 aa)) the chain is on the cytoplasmic side. Positions 304–583 (FSGKNILGKG…EGDGLADRWE (280 aa)) constitute a Protein kinase domain. ATP is bound by residues 310–318 (LGKGGFGNV) and K332. D427 acts as the Proton acceptor in catalysis.

The protein belongs to the protein kinase superfamily. Ser/Thr protein kinase family. In terms of assembly, interacts with MSBP1.

It localises to the cell membrane. The catalysed reaction is L-seryl-[protein] + ATP = O-phospho-L-seryl-[protein] + ADP + H(+). The enzyme catalyses L-threonyl-[protein] + ATP = O-phospho-L-threonyl-[protein] + ADP + H(+). Its function is as follows. LRR receptor kinase that may be involved in defense response. The protein is LRR receptor kinase SERL2 of Oryza sativa subsp. japonica (Rice).